Here is a 242-residue protein sequence, read N- to C-terminus: UPF0246 protein SPCG_1533 (242 aa).

This sequence belongs to the UPF0246 family.

The protein is UPF0246 protein SPCG_1533 of Streptococcus pneumoniae (strain CGSP14).